We begin with the raw amino-acid sequence, 581 residues long: Proline--tRNA ligase (581 aa).

It belongs to the class-II aminoacyl-tRNA synthetase family. ProS type 1 subfamily. Homodimer.

It localises to the cytoplasm. The enzyme catalyses tRNA(Pro) + L-proline + ATP = L-prolyl-tRNA(Pro) + AMP + diphosphate. Its function is as follows. Catalyzes the attachment of proline to tRNA(Pro) in a two-step reaction: proline is first activated by ATP to form Pro-AMP and then transferred to the acceptor end of tRNA(Pro). As ProRS can inadvertently accommodate and process non-cognate amino acids such as alanine and cysteine, to avoid such errors it has two additional distinct editing activities against alanine. One activity is designated as 'pretransfer' editing and involves the tRNA(Pro)-independent hydrolysis of activated Ala-AMP. The other activity is designated 'posttransfer' editing and involves deacylation of mischarged Ala-tRNA(Pro). The misacylated Cys-tRNA(Pro) is not edited by ProRS. This is Proline--tRNA ligase from Paracidovorax citrulli (strain AAC00-1) (Acidovorax citrulli).